A 114-amino-acid polypeptide reads, in one-letter code: Iron-sulfur cluster insertion protein ErpA (114 aa).

Residues Cys-42, Cys-106, and Cys-108 each coordinate iron-sulfur cluster.

It belongs to the HesB/IscA family. Homodimer. Iron-sulfur cluster serves as cofactor.

Its function is as follows. Required for insertion of 4Fe-4S clusters for at least IspG. This Sodalis glossinidius (strain morsitans) protein is Iron-sulfur cluster insertion protein ErpA.